Consider the following 337-residue polypeptide: ATP-dependent 6-phosphofructokinase (337 aa).

Gly11 is a binding site for ATP. Residue 21–25 participates in ADP binding; that stretch reads RAVVR. Residues 72-73 and 102-105 contribute to the ATP site; these read RY and GDGS. Asp103 contributes to the Mg(2+) binding site. Substrate is bound at residue 125-127; sequence TID. The Proton acceptor role is filled by Asp127. Arg154 contacts ADP. Residues Arg162 and 169 to 171 each bind substrate; that span reads MGR. Residues 185–187, Lys212, and 214–216 contribute to the ADP site; these read GAD and KNH. Residues Glu223, Arg245, and 251 to 254 each bind substrate; that span reads HILR.

It belongs to the phosphofructokinase type A (PFKA) family. ATP-dependent PFK group I subfamily. Prokaryotic clade 'B1' sub-subfamily. Homotetramer. Mg(2+) serves as cofactor.

The protein localises to the cytoplasm. The catalysed reaction is beta-D-fructose 6-phosphate + ATP = beta-D-fructose 1,6-bisphosphate + ADP + H(+). It participates in carbohydrate degradation; glycolysis; D-glyceraldehyde 3-phosphate and glycerone phosphate from D-glucose: step 3/4. With respect to regulation, allosterically activated by ADP and other diphosphonucleosides, and allosterically inhibited by phosphoenolpyruvate. Functionally, catalyzes the phosphorylation of D-fructose 6-phosphate to fructose 1,6-bisphosphate by ATP, the first committing step of glycolysis. The chain is ATP-dependent 6-phosphofructokinase from Streptococcus pyogenes serotype M4 (strain MGAS10750).